The sequence spans 232 residues: MEKIKVKEIFNNVYSVDFGDGLKRIATKSLVPGKRVYGEKLVYSDSIEYRVWNPNKSKLGAAIINGLKKMPIKKGTKVLYLGASAGTTPSHVADIAENSLVYALEFAPRIMREFIDSCNERKNLIPVLGDANRPQDYSNIVEKVDVIFEDVAQPNQAEILVKNARWFLKENGYAMISIKARSVDVTKNPREIFAEQKKILIEGGFEIVDEINIEPFEKDHMMMVGIWNETKY.

Residues 87–88 (TT), 105–106 (EF), 130–131 (DA), and 150–153 (DVAQ) each bind S-adenosyl-L-methionine.

The protein belongs to the methyltransferase superfamily. Fibrillarin family. In terms of assembly, interacts with nop5. Component of box C/D small ribonucleoprotein (sRNP) particles that contain rpl7ae, FlpA and nop5, plus a guide RNA.

In terms of biological role, involved in pre-rRNA and tRNA processing. Utilizes the methyl donor S-adenosyl-L-methionine to catalyze the site-specific 2'-hydroxyl methylation of ribose moieties in rRNA and tRNA. Site specificity is provided by a guide RNA that base pairs with the substrate. Methylation occurs at a characteristic distance from the sequence involved in base pairing with the guide RNA. The protein is Fibrillarin-like rRNA/tRNA 2'-O-methyltransferase of Methanococcus maripaludis (strain C7 / ATCC BAA-1331).